The sequence spans 438 residues: Enolase (438 aa).

Gln164 contributes to the (2R)-2-phosphoglycerate binding site. The Proton donor role is filled by Glu206. Mg(2+)-binding residues include Asp243, Glu289, and Asp316. Positions 341, 370, 371, and 392 each coordinate (2R)-2-phosphoglycerate. Catalysis depends on Lys341, which acts as the Proton acceptor.

It belongs to the enolase family. The cofactor is Mg(2+).

Its subcellular location is the cytoplasm. It localises to the secreted. It is found in the cell surface. It catalyses the reaction (2R)-2-phosphoglycerate = phosphoenolpyruvate + H2O. It functions in the pathway carbohydrate degradation; glycolysis; pyruvate from D-glyceraldehyde 3-phosphate: step 4/5. In terms of biological role, catalyzes the reversible conversion of 2-phosphoglycerate (2-PG) into phosphoenolpyruvate (PEP). It is essential for the degradation of carbohydrates via glycolysis. The protein is Enolase of Borrelia garinii subsp. bavariensis (strain ATCC BAA-2496 / DSM 23469 / PBi) (Borreliella bavariensis).